Here is a 192-residue protein sequence, read N- to C-terminus: Imidazoleglycerol-phosphate dehydratase (192 aa).

It belongs to the imidazoleglycerol-phosphate dehydratase family.

Its subcellular location is the cytoplasm. It carries out the reaction D-erythro-1-(imidazol-4-yl)glycerol 3-phosphate = 3-(imidazol-4-yl)-2-oxopropyl phosphate + H2O. It participates in amino-acid biosynthesis; L-histidine biosynthesis; L-histidine from 5-phospho-alpha-D-ribose 1-diphosphate: step 6/9. The chain is Imidazoleglycerol-phosphate dehydratase from Staphylococcus epidermidis (strain ATCC 12228 / FDA PCI 1200).